The sequence spans 192 residues: Ribose 1,5-bisphosphate phosphokinase PhnN (192 aa).

15–22 (GPSGAGKD) serves as a coordination point for ATP.

It belongs to the ribose 1,5-bisphosphokinase family.

It carries out the reaction alpha-D-ribose 1,5-bisphosphate + ATP = 5-phospho-alpha-D-ribose 1-diphosphate + ADP. It participates in metabolic intermediate biosynthesis; 5-phospho-alpha-D-ribose 1-diphosphate biosynthesis; 5-phospho-alpha-D-ribose 1-diphosphate from D-ribose 5-phosphate (route II): step 3/3. Catalyzes the phosphorylation of ribose 1,5-bisphosphate to 5-phospho-D-ribosyl alpha-1-diphosphate (PRPP). This chain is Ribose 1,5-bisphosphate phosphokinase PhnN, found in Brucella abortus biovar 1 (strain 9-941).